The primary structure comprises 184 residues: Photosystem I assembly protein Ycf4 (184 aa).

A run of 2 helical transmembrane segments spans residues 21–43 (NYFW…VSSY) and 63–85 (GIVM…FTIF).

The protein belongs to the Ycf4 family.

Its subcellular location is the plastid. The protein resides in the chloroplast thylakoid membrane. In terms of biological role, seems to be required for the assembly of the photosystem I complex. This chain is Photosystem I assembly protein Ycf4, found in Chaetosphaeridium globosum (Charophycean green alga).